Reading from the N-terminus, the 360-residue chain is Phosphoserine aminotransferase (360 aa).

Residue Arg42 coordinates L-glutamate. Trp102, Thr152, Asp171, and Gln194 together coordinate pyridoxal 5'-phosphate. Position 195 is an N6-(pyridoxal phosphate)lysine (Lys195). A pyridoxal 5'-phosphate-binding site is contributed by 237 to 238 (NT).

This sequence belongs to the class-V pyridoxal-phosphate-dependent aminotransferase family. SerC subfamily. In terms of assembly, homodimer. Requires pyridoxal 5'-phosphate as cofactor.

Its subcellular location is the cytoplasm. It carries out the reaction O-phospho-L-serine + 2-oxoglutarate = 3-phosphooxypyruvate + L-glutamate. The enzyme catalyses 4-(phosphooxy)-L-threonine + 2-oxoglutarate = (R)-3-hydroxy-2-oxo-4-phosphooxybutanoate + L-glutamate. The protein operates within amino-acid biosynthesis; L-serine biosynthesis; L-serine from 3-phospho-D-glycerate: step 2/3. It functions in the pathway cofactor biosynthesis; pyridoxine 5'-phosphate biosynthesis; pyridoxine 5'-phosphate from D-erythrose 4-phosphate: step 3/5. Its function is as follows. Catalyzes the reversible conversion of 3-phosphohydroxypyruvate to phosphoserine and of 3-hydroxy-2-oxo-4-phosphonooxybutanoate to phosphohydroxythreonine. The sequence is that of Phosphoserine aminotransferase from Coxiella burnetii (strain CbuK_Q154) (Coxiella burnetii (strain Q154)).